The sequence spans 535 residues: GMP synthase [glutamine-hydrolyzing] (535 aa).

In terms of domain architecture, Glutamine amidotransferase type-1 spans 4 to 210 (KILILDFGSQ…VHEICHCKPD (207 aa)). C85 acts as the Nucleophile in catalysis. Active-site residues include H184 and E186. The 193-residue stretch at 211 to 403 (WVMGDYIAEA…LGLPREMVYR (193 aa)) folds into the GMPS ATP-PPase domain. 238–244 (SGGVDSS) is a binding site for ATP.

In terms of assembly, homodimer.

The enzyme catalyses XMP + L-glutamine + ATP + H2O = GMP + L-glutamate + AMP + diphosphate + 2 H(+). It functions in the pathway purine metabolism; GMP biosynthesis; GMP from XMP (L-Gln route): step 1/1. Catalyzes the synthesis of GMP from XMP. This chain is GMP synthase [glutamine-hydrolyzing], found in Polynucleobacter asymbioticus (strain DSM 18221 / CIP 109841 / QLW-P1DMWA-1) (Polynucleobacter necessarius subsp. asymbioticus).